The chain runs to 141 residues: ATP synthase epsilon chain (141 aa).

It belongs to the ATPase epsilon chain family. F-type ATPases have 2 components, CF(1) - the catalytic core - and CF(0) - the membrane proton channel. CF(1) has five subunits: alpha(3), beta(3), gamma(1), delta(1), epsilon(1). CF(0) has three main subunits: a, b and c.

It is found in the cell inner membrane. In terms of biological role, produces ATP from ADP in the presence of a proton gradient across the membrane. The polypeptide is ATP synthase epsilon chain (Paraburkholderia phytofirmans (strain DSM 17436 / LMG 22146 / PsJN) (Burkholderia phytofirmans)).